Reading from the N-terminus, the 743-residue chain is Phosphoribosylformylglycinamidine synthase subunit PurL (743 aa).

The active site involves His-50. ATP-binding residues include Tyr-53 and Lys-92. Glu-94 is a binding site for Mg(2+). Substrate-binding positions include 95 to 98 and Arg-117; that span reads SHNH. His-96 (proton acceptor) is an active-site residue. Asp-118 is a Mg(2+) binding site. A substrate-binding site is contributed by Gln-241. A Mg(2+)-binding site is contributed by Asp-269. Residue 313 to 315 participates in substrate binding; the sequence is ESQ. Residues Asp-494 and Gly-531 each coordinate ATP. Asn-532 contributes to the Mg(2+) binding site. A substrate-binding site is contributed by Ser-534.

It belongs to the FGAMS family. As to quaternary structure, monomer. Part of the FGAM synthase complex composed of 1 PurL, 1 PurQ and 2 PurS subunits.

Its subcellular location is the cytoplasm. It catalyses the reaction N(2)-formyl-N(1)-(5-phospho-beta-D-ribosyl)glycinamide + L-glutamine + ATP + H2O = 2-formamido-N(1)-(5-O-phospho-beta-D-ribosyl)acetamidine + L-glutamate + ADP + phosphate + H(+). The protein operates within purine metabolism; IMP biosynthesis via de novo pathway; 5-amino-1-(5-phospho-D-ribosyl)imidazole from N(2)-formyl-N(1)-(5-phospho-D-ribosyl)glycinamide: step 1/2. Its function is as follows. Part of the phosphoribosylformylglycinamidine synthase complex involved in the purines biosynthetic pathway. Catalyzes the ATP-dependent conversion of formylglycinamide ribonucleotide (FGAR) and glutamine to yield formylglycinamidine ribonucleotide (FGAM) and glutamate. The FGAM synthase complex is composed of three subunits. PurQ produces an ammonia molecule by converting glutamine to glutamate. PurL transfers the ammonia molecule to FGAR to form FGAM in an ATP-dependent manner. PurS interacts with PurQ and PurL and is thought to assist in the transfer of the ammonia molecule from PurQ to PurL. The protein is Phosphoribosylformylglycinamidine synthase subunit PurL of Rhizobium meliloti (strain 1021) (Ensifer meliloti).